We begin with the raw amino-acid sequence, 108 residues long: uncharacterized protein (108 aa).

Helical transmembrane passes span 32–52 (YFFF…LLAI) and 68–88 (SYLL…LVVG).

Its subcellular location is the membrane. This is an uncharacterized protein from Saccharomyces cerevisiae (strain ATCC 204508 / S288c) (Baker's yeast).